A 337-amino-acid polypeptide reads, in one-letter code: Biotin synthase (337 aa).

Positions 58 to 283 (EDVEVEGIVS…RTVLRYAGGR (226 aa)) constitute a Radical SAM core domain. The [4Fe-4S] cluster site is built by C73, C77, and C80. The [2Fe-2S] cluster site is built by C116, C149, C208, and R278.

It belongs to the radical SAM superfamily. Biotin synthase family. Homodimer. [4Fe-4S] cluster is required as a cofactor. The cofactor is [2Fe-2S] cluster.

It catalyses the reaction (4R,5S)-dethiobiotin + (sulfur carrier)-SH + 2 reduced [2Fe-2S]-[ferredoxin] + 2 S-adenosyl-L-methionine = (sulfur carrier)-H + biotin + 2 5'-deoxyadenosine + 2 L-methionine + 2 oxidized [2Fe-2S]-[ferredoxin]. It functions in the pathway cofactor biosynthesis; biotin biosynthesis; biotin from 7,8-diaminononanoate: step 2/2. Functionally, catalyzes the conversion of dethiobiotin (DTB) to biotin by the insertion of a sulfur atom into dethiobiotin via a radical-based mechanism. This is Biotin synthase from Pseudarthrobacter chlorophenolicus (strain ATCC 700700 / DSM 12829 / CIP 107037 / JCM 12360 / KCTC 9906 / NCIMB 13794 / A6) (Arthrobacter chlorophenolicus).